Here is a 301-residue protein sequence, read N- to C-terminus: Fatty acid elongase 3 (301 aa).

7 consecutive transmembrane segments (helical) span residues 31–51 (VPYI…KSIM), 64–84 (IVWN…TVPY), 122–142 (ALAD…LFAL), 161–181 (VIFL…FAYV), 187–207 (GLWF…YYFV), 219–239 (FAPI…IVVC), and 257–277 (FSLH…SQLF). The short motif at 165–169 (HWYHH) is the HxxHH motif element. His-168 serves as the catalytic Nucleophile.

It belongs to the ELO family.

The protein localises to the endoplasmic reticulum membrane. The catalysed reaction is an acyl-CoA + malonyl-CoA + H(+) = a 3-oxoacyl-CoA + CO2 + CoA. It participates in lipid metabolism; fatty acid biosynthesis. Its function is as follows. Involved in the synthesis of fatty acids. Elongates C14 fatty acids to C18. The protein is Fatty acid elongase 3 of Trypanosoma brucei brucei (strain 927/4 GUTat10.1).